The primary structure comprises 402 residues: Flavohemoprotein (402 aa).

The region spanning 1-136 is the Globin domain; the sequence is MLSEKTIEIV…IADAFISIEA (136 aa). Histidine 85 is a heme b binding site. Active-site charge relay system residues include tyrosine 95 and glutamate 135. The segment at 147-402 is reductase; that stretch reads GGWKDFRNFV…EFFGPAASLQ (256 aa). In terms of domain architecture, FAD-binding FR-type spans 150 to 260; sequence KDFRNFVVVK…SAPAGDFVLN (111 aa). FAD is bound by residues tyrosine 188 and 204 to 207; that span reads RQYS. Residue 273 to 278 participates in NADP(+) binding; it reads GVGITP. Residue 394–397 participates in FAD binding; the sequence is FFGP.

It belongs to the globin family. Two-domain flavohemoproteins subfamily. This sequence in the C-terminal section; belongs to the flavoprotein pyridine nucleotide cytochrome reductase family. Requires heme b as cofactor. The cofactor is FAD.

It catalyses the reaction 2 nitric oxide + NADPH + 2 O2 = 2 nitrate + NADP(+) + H(+). It carries out the reaction 2 nitric oxide + NADH + 2 O2 = 2 nitrate + NAD(+) + H(+). In terms of biological role, is involved in NO detoxification in an aerobic process, termed nitric oxide dioxygenase (NOD) reaction that utilizes O(2) and NAD(P)H to convert NO to nitrate, which protects the bacterium from various noxious nitrogen compounds. Therefore, plays a central role in the inducible response to nitrosative stress. The chain is Flavohemoprotein from Bacillus thuringiensis subsp. konkukian (strain 97-27).